The chain runs to 192 residues: N-terminal acetyltransferase A complex catalytic subunit NAA10 (192 aa).

Residues 2–152 (VCIRRATVDD…DAYDMRKNLK (151 aa)) form the N-acetyltransferase domain.

Belongs to the acetyltransferase family. ARD1 subfamily. Part of the NatA complex. Interacts with NAA15. As to expression, expressed in leaves, roots, shoots and flowers.

The catalysed reaction is N-terminal glycyl-[protein] + acetyl-CoA = N-terminal N(alpha)-acetylglycyl-[protein] + CoA + H(+). The enzyme catalyses N-terminal L-alanyl-[protein] + acetyl-CoA = N-terminal N(alpha)-acetyl-L-alanyl-[protein] + CoA + H(+). It carries out the reaction N-terminal L-seryl-[protein] + acetyl-CoA = N-terminal N(alpha)-acetyl-L-seryl-[protein] + CoA + H(+). It catalyses the reaction N-terminal L-valyl-[protein] + acetyl-CoA = N-terminal N(alpha)-acetyl-L-valyl-[protein] + CoA + H(+). The catalysed reaction is N-terminal L-cysteinyl-[protein] + acetyl-CoA = N-terminal N(alpha)-acetyl-L-cysteinyl-[protein] + CoA + H(+). The enzyme catalyses N-terminal L-threonyl-[protein] + acetyl-CoA = N-terminal N(alpha)-acetyl-L-threonyl-[protein] + CoA + H(+). Catalytic subunit of the NatA N-alpha-acetyltransferase complex. Required for male gametocyte development, embryogenesis, suspensor development and the formation of the quiescent center (QC) in the root meristem. Involved in plant immunity through the regulation of SNC1 and RPM1 stability. This is N-terminal acetyltransferase A complex catalytic subunit NAA10 from Arabidopsis thaliana (Mouse-ear cress).